We begin with the raw amino-acid sequence, 280 residues long: Sulfur carrier protein FdhD (280 aa).

Cys121 acts as the Cysteine persulfide intermediate in catalysis. 258–263 (FSRPGR) lines the Mo-bis(molybdopterin guanine dinucleotide) pocket.

This sequence belongs to the FdhD family.

Its subcellular location is the cytoplasm. Its function is as follows. Required for formate dehydrogenase (FDH) activity. Acts as a sulfur carrier protein that transfers sulfur from IscS to the molybdenum cofactor prior to its insertion into FDH. This chain is Sulfur carrier protein FdhD, found in Cronobacter sakazakii (strain ATCC BAA-894) (Enterobacter sakazakii).